Consider the following 546-residue polypeptide: Probable E3 ubiquitin-protein ligase NGR_a03640 (546 aa).

The disordered stretch occupies residues 1 to 70; that stretch reads MNVQRPGLAV…RPWEGRPQEA (70 aa). An interaction with target proteins region spans residues 1–248; it reads MNVQRPGLAV…YAGPQIFLPM (248 aa). The segment covering 22 to 48 has biased composition (low complexity); that stretch reads SEPGSPAAAARWVEASTEAEASAASSS. The span at 58-67 shows a compositional bias: basic and acidic residues; that stretch reads AEERPWEGRP. LRR repeat units follow at residues 104–125, 126–144, 145–166, 167–186, and 187–208; these read GLRR…LPGT, LLEL…DLPA, GLQR…LPAA, LEWL…MIPP, and ELIW…LLTQ. The tract at residues 249 to 256 is linker; it reads GPVELARR. Positions 257-546 constitute an NEL domain; sequence PLHEVVADWL…KVLRGRGLEL (290 aa). The interval 257–546 is E3 ubiquitin-protein ligase catalytic domain; sequence PLHEVVADWL…KVLRGRGLEL (290 aa). Residue C338 is the Glycyl thioester intermediate of the active site.

This sequence belongs to the LRR-containing bacterial E3 ligase family. Ubiquitinated in the presence of host E1 ubiquitin-activating enzyme, E2 ubiquitin-conjugating enzyme and ubiquitin.

It localises to the secreted. It is found in the host cytoplasm. Functionally, effector proteins function to alter host cell physiology and promote bacterial survival in host tissues. This protein is an E3 ubiquitin ligase that interferes with host's ubiquitination pathway. The sequence is that of Probable E3 ubiquitin-protein ligase NGR_a03640 from Sinorhizobium fredii (strain NBRC 101917 / NGR234).